Here is a 1111-residue protein sequence, read N- to C-terminus: MPDQDTKAKSTEKTADKQQGTTTRDYSDLKRLRCLLNVQSSKQQLPAINFDSAQNNMTKSEPTIRTGGHRARGQWHESTEAVELENFSINYKNERNFSKHPQHQLFQEIFTALVRNRLICREWVNRAPSIHFLRVLICLRLLMRDPCYQEILHKLGGIEDLAQYMEIVANEYLGYAEEQHCVDKLVNMTYIFQKLAAVKDQREWVTASGAHKTLVSLLGARDTTVLLGALLALASLAESSECREKISELNVVENLLMILHEYDLLSKRLTAELLRLLCAEPQIKEQVKLYEGIPILLSLLHSDHLKLLWSVIWILVQVCEDPETSVEIRIWGGIKQLLHILQGDRNFVSDRSSIGSLSSANAAGRIQQLHLSEDLSPGEIEENTVSLQAACCAALTELALNDTNAHQVVQENGVYTIAKLILPNKQSNAAQTNLLQCYAFRTLRFLFSMERNRPLFKRLFPTDLFETFIDIGHYVRDIGAYKDLVSQLNLLLEDELKQIAENIESINQKKAPLKYIGDYAVLDHLGSGAFGCVYKVRKRSGQNLLAMKEVNLHNPAFGKDKKDRDSSVKNIVSELTIIKEQLYHPNVVRYYKTFLENDRLYIVMELIEGAPLGEHFNSLKEKHHHFSEERLWKIFIQLCLALRYLHKEKRIVHRDLTPNNIMLGDKDKVTVTDFGLAKQKQESSKLTSMVGTILYSCPEVLKSEPYGEKADVWAAGCILYQMATLSPPFCSTNMLSLATKIVEAVYEPVPEGIYSEKVTDTIRRCLTPDAEARPDIVEVSSMISDVMMKYLDRLSTSQLALERKLERERRRTQRYFMEANRNAVTCHHELALLSQETFEKASLSSSSSGAASLKSELSESAELPGEGCHIPCGKEEDRVCEEVLSEDNFQLESVEKDLYSELDDELDVSDNCSSSSSSPLKESTFSILKRSFSASGRERHSQARDFIAGLGSRPRPGPQMSTFVVESASAGIAVSQRKVRQICDPIQQILIQLHKVIYITQLPPALHHDLKRRVIERFKKSLFSQQSNPCNLKSEIKKLSQGSPEPIELNFLTSDYHSLRHSRAANNWSPSDPTGSPSSFEVEEGVTYEQMQTVIEEVLEESGYYNFTTKR.

Basic and acidic residues predominate over residues 1–16 (MPDQDTKAKSTEKTAD). 2 disordered regions span residues 1 to 24 (MPDQDTKAKSTEKTADKQQGTTTR) and 47 to 72 (AINFDSAQNNMTKSEPTIRTGGHRAR). Residues 47-63 (AINFDSAQNNMTKSEPT) show a composition bias toward polar residues. The stretch at 481 to 514 (YKDLVSQLNLLLEDELKQIAENIESINQKKAPLK) forms a coiled coil. The region spanning 519 to 791 (YAVLDHLGSG…MISDVMMKYL (273 aa)) is the Protein kinase domain. ATP is bound by residues 525–533 (LGSGAFGCV) and Lys548. The active-site Proton acceptor is Asp655.

Belongs to the protein kinase superfamily. NEK Ser/Thr protein kinase family. NIMA subfamily. In terms of assembly, interacts with RAF1 and MAP2K1; the interaction is direct with RAF1 and required for ERK1/2-signaling pathway activation in response to UV irradiation. Requires Mg(2+) as cofactor. Expressed in the mammary gland, lung, spleen, and kidney.

It catalyses the reaction L-seryl-[protein] + ATP = O-phospho-L-seryl-[protein] + ADP + H(+). The catalysed reaction is L-threonyl-[protein] + ATP = O-phospho-L-threonyl-[protein] + ADP + H(+). Its function is as follows. Plays a role in the cellular response to UV irradiation. Mediates G2/M cell cycle arrest, MEK autoactivation and ERK1/2-signaling pathway activation in response to UV irradiation. In ciliated cells, it is involved in the regulation of mucociliary transport. The polypeptide is Serine/threonine-protein kinase Nek10 (Mus musculus (Mouse)).